The chain runs to 534 residues: Flavonoid-6-hydroxylase (534 aa).

A helical transmembrane segment spans residues 3 to 23; sequence FISFVYTLIAFSSLLYFYLIW. Cysteine 467 contacts heme.

This sequence belongs to the cytochrome P450 family. It depends on heme as a cofactor. As to expression, expressed in leaves.

The protein localises to the membrane. It catalyses the reaction genkwanin + reduced [NADPH--hemoprotein reductase] + O2 = scutellarein 7-methyl ether + oxidized [NADPH--hemoprotein reductase] + H2O. It carries out the reaction (2S)-sakuranetin + reduced [NADPH--hemoprotein reductase] + O2 = (2S)-7-methylcarthamidin + oxidized [NADPH--hemoprotein reductase] + H2O + H(+). The enzyme catalyses apigenin 4',7-dimethyl ether + reduced [NADPH--hemoprotein reductase] + O2 = ladanein + oxidized [NADPH--hemoprotein reductase] + H2O + H(+). The catalysed reaction is (2S)-naringenin 4',7-dimethyl ether + reduced [NADPH--hemoprotein reductase] + O2 = (2S)-carthamidin-4',7-dimethyl ether + oxidized [NADPH--hemoprotein reductase] + H2O + H(+). The protein operates within flavonoid metabolism. Hydroxylase involved in the biosynthesis of polymethoxylated flavonoids natural products such as nevadensin and salvigenin, aroma compounds which contribute to the flavor of sweet basil, and exhibit pharmacological activities such as anti-allergic, anti-oxidant, antibacterial, anti-proliferative, and anti-inflammatory effects. Catalyzes the 6-hydroxylation of 7-O-methylated precursors such as the conversion of genkwanin (GENK) to scutellarein-7-methyl ether (SCU7Me). Can also use, with a lower efficiency, apigenin-7,4'-dimethyl ether (AdM), naringenin-7-methyl ether (SAK) and naringenin-7,4'-dimethyl ether (NdM) as substrates. The sequence is that of Flavonoid-6-hydroxylase from Ocimum basilicum (Sweet basil).